The primary structure comprises 114 residues: Nuclear transition protein 2 (114 aa).

The tract at residues 1–114 (MDTKMQSLPT…KRRSSGRRYK (114 aa)) is disordered. Zn(2+) contacts are provided by His12, His14, His16, His24, Cys29, Cys31, Cys35, and Cys38. A compositionally biased stretch (low complexity) spans 16 to 25 (HSSSRPQSHT). The short motif at 87 to 95 (GKVSKRKAV) is the Nuclear localization signal element. Basic residues predominate over residues 90–114 (SKRKAVRRRKRTHRAKRRSSGRRYK). Thr101 bears the Phosphothreonine; by PKA mark. At Ser109 the chain carries Phosphoserine; by PKA.

The protein belongs to the nuclear transition protein 2 family. In terms of tissue distribution, testis.

It localises to the nucleus. The protein resides in the nucleolus. Its subcellular location is the chromosome. Plays a key role in the replacement of histones to protamine in the elongating spermatids of mammals. In condensing spermatids, loaded onto the nucleosomes, where it promotes the recruitment and processing of protamines, which are responsible for histone eviction. This is Nuclear transition protein 2 (Tnp2) from Rattus norvegicus (Rat).